The following is a 315-amino-acid chain: NAD kinase (315 aa).

Residue Asp91 is the Proton acceptor of the active site. Residues 91-92 (DG), Arg96, 165-166 (NE), Asp195, and 206-211 (TAYAFS) contribute to the NAD(+) site.

The protein belongs to the NAD kinase family. The cofactor is a divalent metal cation.

It is found in the cytoplasm. The enzyme catalyses NAD(+) + ATP = ADP + NADP(+) + H(+). Functionally, involved in the regulation of the intracellular balance of NAD and NADP, and is a key enzyme in the biosynthesis of NADP. Catalyzes specifically the phosphorylation on 2'-hydroxyl of the adenosine moiety of NAD to yield NADP. In Rhodococcus erythropolis (strain PR4 / NBRC 100887), this protein is NAD kinase.